A 390-amino-acid chain; its full sequence is Succinate--CoA ligase [ADP-forming] subunit beta (390 aa).

One can recognise an ATP-grasp domain in the interval 9–245 (KHLLKKYNIP…TTQEDEHETM (237 aa)). Residues Lys-46, 53-55 (GRG), Glu-99, Ser-102, and Glu-107 contribute to the ATP site. Mg(2+) is bound by residues Asn-200 and Asp-214. Residues Asn-265 and 322–324 (GIV) contribute to the substrate site.

It belongs to the succinate/malate CoA ligase beta subunit family. Heterotetramer of two alpha and two beta subunits. Mg(2+) is required as a cofactor.

It carries out the reaction succinate + ATP + CoA = succinyl-CoA + ADP + phosphate. It catalyses the reaction GTP + succinate + CoA = succinyl-CoA + GDP + phosphate. It functions in the pathway carbohydrate metabolism; tricarboxylic acid cycle; succinate from succinyl-CoA (ligase route): step 1/1. Functionally, succinyl-CoA synthetase functions in the citric acid cycle (TCA), coupling the hydrolysis of succinyl-CoA to the synthesis of either ATP or GTP and thus represents the only step of substrate-level phosphorylation in the TCA. The beta subunit provides nucleotide specificity of the enzyme and binds the substrate succinate, while the binding sites for coenzyme A and phosphate are found in the alpha subunit. The chain is Succinate--CoA ligase [ADP-forming] subunit beta from Coxiella burnetii (strain RSA 331 / Henzerling II).